We begin with the raw amino-acid sequence, 298 residues long: Protein ILRUN (298 aa).

The disordered stretch occupies residues 199–277; it reads NTQPHRKVEG…SVNLSPSSHA (79 aa). Phosphoserine occurs at positions 215 and 222. Low complexity predominate over residues 242–255; the sequence is TWAPAPDTWAPAPD. The span at 262-277 shows a compositional bias: polar residues; it reads NRLSQNSVNLSPSSHA. Phosphoserine is present on S272.

Interacts with IRF3; the interaction inhibits IRF3 binding to its DNA consensus sequence. As to expression, expressed in lung (at protein level).

The protein resides in the cytoplasm. It is found in the nucleus. In terms of biological role, negative regulator of innate antiviral response. Blocks IRF3-dependent cytokine production such as IFNA, IFNB and TNF. Interacts with IRF3 and inhibits IRF3 recruitment to type I IFN promoter sequences while also reducing nuclear levels of the coactivators EP300 and CREBBP. This is Protein ILRUN from Homo sapiens (Human).